Reading from the N-terminus, the 137-residue chain is MRAVGVFLAICLVTIFVLPTWGNWAYPCCHVTQLRAQHLLALENISDIYLVSNQTCDGFSLASLNSPKNGSNQLVISRCANGLNVVSFFISILKRSSSALTGHLRELLTTLETLYGSFSVEDLFGANLNRYAWHRGG.

A signal peptide spans 1 to 22 (MRAVGVFLAICLVTIFVLPTWG). Residues 23 to 128 (NWAYPCCHVT…SVEDLFGANL (106 aa)) are interaction with gH. 2 disulfides stabilise this stretch: cysteine 28/cysteine 56 and cysteine 29/cysteine 79.

Belongs to the herpesviridae glycoprotein L family. In terms of assembly, interacts with glycoprotein H (gH); this interaction is necessary for the correct processing and cell surface expression of gH. The heterodimer gH/gL seems to interact with gB trimers during fusion. The heterodimer gH/gL interacts with host EPHA2 to facilitate virus internalization and fusion.

The protein resides in the virion membrane. Its subcellular location is the host cell membrane. The protein localises to the host Golgi apparatus. It is found in the host trans-Golgi network. In terms of biological role, the heterodimer glycoprotein H-glycoprotein L is required for the fusion of viral and plasma membranes leading to virus entry into the host cell. Acts as a functional inhibitor of gH and maintains gH in an inhibited form. Upon binding to host integrins, gL dissociates from gH leading to activation of the viral fusion glycoproteins gB and gH. Fusion of EBV with B-lymphocytes requires the additional receptor-binding protein gp42, which forms a complex with gH/gL. The heterodimer gH/gL targets also host EPHA2 to promote viral entry. The sequence is that of Envelope glycoprotein L from Homo sapiens (Human).